Consider the following 682-residue polypeptide: Glutamine--fructose-6-phosphate aminotransferase [isomerizing] 2 (682 aa).

The For GATase activity role is filled by cysteine 2. Positions 2–288 (CGIFAYMNYR…DDDIAAVADG (287 aa)) constitute a Glutamine amidotransferase type-2 domain. Serine 244 is subject to Phosphoserine. SIS domains lie at 360–499 (HLKE…DRIS) and 531–672 (LALE…VDFP). Residues 377 to 378 (TS), 422 to 424 (SQS), threonine 427, and histidine 578 contribute to the substrate site.

The enzyme catalyses D-fructose 6-phosphate + L-glutamine = D-glucosamine 6-phosphate + L-glutamate. It participates in nucleotide-sugar biosynthesis; UDP-N-acetyl-alpha-D-glucosamine biosynthesis; alpha-D-glucosamine 6-phosphate from D-fructose 6-phosphate: step 1/1. Controls the flux of glucose into the hexosamine pathway. Most likely involved in regulating the availability of precursors for N- and O-linked glycosylation of proteins. This is Glutamine--fructose-6-phosphate aminotransferase [isomerizing] 2 (Gfpt2) from Mus musculus (Mouse).